The chain runs to 564 residues: Probable lysosomal cobalamin transporter (564 aa).

The next 9 helical transmembrane spans lie at 8–28 (LIWS…STFI), 41–61 (VTLI…LLPV), 94–114 (TIVY…GIPF), 144–164 (YTLF…FIPT), 188–208 (ALTF…IIYT), 312–332 (LLAG…LCVT), 375–395 (VIFT…IAAF), 418–438 (LLLT…VAVI), and 506–526 (FFGA…LLVL).

It belongs to the LIMR family. LMBRD1 subfamily.

It is found in the lysosome membrane. Probable lysosomal cobalamin transporter. Required to export cobalamin from lysosomes allowing its conversion to cofactors. This chain is Probable lysosomal cobalamin transporter, found in Aspergillus clavatus (strain ATCC 1007 / CBS 513.65 / DSM 816 / NCTC 3887 / NRRL 1 / QM 1276 / 107).